The primary structure comprises 321 residues: Glucokinase (321 aa).

ATP is bound at residue 8–13 (GDVGGT).

The protein belongs to the bacterial glucokinase family.

Its subcellular location is the cytoplasm. The catalysed reaction is D-glucose + ATP = D-glucose 6-phosphate + ADP + H(+). This chain is Glucokinase, found in Citrobacter koseri (strain ATCC BAA-895 / CDC 4225-83 / SGSC4696).